Consider the following 1427-residue polypeptide: DNA-directed RNA polymerase subunit beta' (1427 aa).

Zn(2+) is bound by residues cysteine 66, cysteine 68, cysteine 81, and cysteine 84. Aspartate 472, aspartate 474, and aspartate 476 together coordinate Mg(2+). The Zn(2+) site is built by cysteine 815, cysteine 889, cysteine 896, and cysteine 899.

This sequence belongs to the RNA polymerase beta' chain family. As to quaternary structure, the RNAP catalytic core consists of 2 alpha, 1 beta, 1 beta' and 1 omega subunit. When a sigma factor is associated with the core the holoenzyme is formed, which can initiate transcription. Mg(2+) serves as cofactor. Zn(2+) is required as a cofactor.

The catalysed reaction is RNA(n) + a ribonucleoside 5'-triphosphate = RNA(n+1) + diphosphate. Its function is as follows. DNA-dependent RNA polymerase catalyzes the transcription of DNA into RNA using the four ribonucleoside triphosphates as substrates. The protein is DNA-directed RNA polymerase subunit beta' of Bacteroides fragilis (strain YCH46).